Reading from the N-terminus, the 457-residue chain is Cystathionine beta-lyase, chloroplastic (457 aa).

The N-terminal 51 residues, 1-51, are a transit peptide targeting the chloroplast; that stretch reads MFSRPFVTPVTIDLQVKSITAGNMWEGLGFYKPANSKSNQMICSKGFRLNC. Residues Tyr120, Arg122, Gly150, Met151, Ser268, and Thr270 each contribute to the pyridoxal 5'-phosphate site. Lys271 carries the post-translational modification N6-(pyridoxal phosphate)lysine.

The protein belongs to the trans-sulfuration enzymes family. As to quaternary structure, forms homodimers. May form homotetramers from two homodimers. Pyridoxal 5'-phosphate serves as cofactor.

Its subcellular location is the plastid. The protein localises to the chloroplast. The catalysed reaction is L,L-cystathionine + H2O = L-homocysteine + pyruvate + NH4(+). The enzyme catalyses an S-substituted L-cysteine + H2O = a thiol + pyruvate + NH4(+). In terms of biological role, catalyzes the degradation of cystathionine. The polypeptide is Cystathionine beta-lyase, chloroplastic (Mimosa pudica (Sensitive plant)).